The following is a 543-amino-acid chain: Chaperonin GroEL 2 (543 aa).

Residues 29–32, 86–90, glycine 413, and aspartate 495 contribute to the ATP site; these read TLGP and DGTTT. Positions 524-543 are disordered; that stretch reads KPEPKENAPTGAGMGGDFDY.

This sequence belongs to the chaperonin (HSP60) family. As to quaternary structure, forms a cylinder of 14 subunits composed of two heptameric rings stacked back-to-back. Interacts with the co-chaperonin GroES.

The protein resides in the cytoplasm. The catalysed reaction is ATP + H2O + a folded polypeptide = ADP + phosphate + an unfolded polypeptide.. Its function is as follows. Together with its co-chaperonin GroES, plays an essential role in assisting protein folding. The GroEL-GroES system forms a nano-cage that allows encapsulation of the non-native substrate proteins and provides a physical environment optimized to promote and accelerate protein folding. The polypeptide is Chaperonin GroEL 2 (Acaryochloris marina (strain MBIC 11017)).